Here is a 317-residue protein sequence, read N- to C-terminus: 3'-5' exoribonuclease YhaM (317 aa).

The OB DNA-binding region spans 17 to 90; sequence FLLIKESTRG…QLKILSIRLS (74 aa). The HD domain occupies 163 to 279; it reads HVVSMLAIGK…LHLIDLIDAK (117 aa).

Belongs to the YhaM family.

In terms of biological role, shows a 3'-5' exoribonuclease activity. The chain is 3'-5' exoribonuclease YhaM from Oceanobacillus iheyensis (strain DSM 14371 / CIP 107618 / JCM 11309 / KCTC 3954 / HTE831).